Reading from the N-terminus, the 277-residue chain is Proteasome assembly chaperone 1 (277 aa).

The protein belongs to the PSMG1 family. As to quaternary structure, forms a heterodimer with psmg2. In terms of processing, degraded by the proteasome upon completion of 20S proteasome maturation.

The protein resides in the cytoplasm. The protein localises to the endoplasmic reticulum. In terms of biological role, chaperone protein which promotes assembly of the 20S proteasome as part of a heterodimer with psmg2. The sequence is that of Proteasome assembly chaperone 1 from Danio rerio (Zebrafish).